A 353-amino-acid chain; its full sequence is Casein kinase II subunit alpha (353 aa).

A Protein kinase domain is found at 39-324 (YQLVRKLGRG…AREAMDHPYF (286 aa)). ATP is bound by residues 45-53 (LGRGKYSEV) and Lys-68. The active-site Proton acceptor is the Asp-156. Residues 334 to 353 (MVSSNSPTPNALQGPISTTE) form a disordered region.

The protein belongs to the protein kinase superfamily. Ser/Thr protein kinase family. CK2 subfamily. As to quaternary structure, tetramer of two alpha and two beta chains.

It carries out the reaction L-seryl-[protein] + ATP = O-phospho-L-seryl-[protein] + ADP + H(+). The catalysed reaction is L-threonyl-[protein] + ATP = O-phospho-L-threonyl-[protein] + ADP + H(+). Its function is as follows. Casein kinases are operationally defined by their preferential utilization of acidic proteins such as caseins as substrates. The alpha chain contains the catalytic site. May participate in Wnt signaling. The polypeptide is Casein kinase II subunit alpha (Spodoptera frugiperda (Fall armyworm)).